The chain runs to 454 residues: Tumor necrosis factor receptor superfamily member 1A (454 aa).

The first 29 residues, 1–29 (MGLPTVPGLLLSLVLLALLMGIHPSGVTG), serve as a signal peptide directing secretion. Residues 30-212 (LVPSLGDREK…VTNPQDSGTA (183 aa)) lie on the Extracellular side of the membrane. TNFR-Cys repeat units follow at residues 43-82 (LCPQ…TVCR), 83-125 (ECEK…DTVC), 126-166 (GCKE…NTVC), and 167-196 (NCHA…KLCL). 12 disulfide bridges follow: C44/C58, C59/C72, C62/C81, C84/C99, C102/C117, C105/C125, C127/C143, C146/C158, C149/C166, C168/C179, C182/C195, and C185/C191. N-linked (GlcNAc...) asparagine glycosylation is present at N54. N-linked (GlcNAc...) asparagine glycosylation occurs at N151. N202 carries N-linked (GlcNAc...) asparagine glycosylation. Residues 213 to 235 (VLLPLVILLGLCLLSFIFISLMC) traverse the membrane as a helical segment. The Cytoplasmic portion of the chain corresponds to 236–454 (RYPRWRPEVY…APSSTTRLPR (219 aa)). Positions 339 to 349 (VQKWEDSAHPQ) are N-SMase activation domain (NSD). A Death domain is found at 356 to 441 (LAILYAVVDG…GCLENILEAL (86 aa)). The (Microbial infection) N-beta-linked (GlcNAc) arginine glycan is linked to R376.

Binding of TNF to the extracellular domain leads to homotrimerization. The aggregated death domains provide a novel molecular interface that interacts specifically with the death domain of TRADD. Various TRADD-interacting proteins such as TRAFS, RIPK1 and possibly FADD, are recruited to the complex by their association with TRADD. This complex activates at least two distinct signaling cascades, apoptosis and NF-kappa-B signaling. Interacts with BAG4, BABAM2, FEM1B, GRB2, SQSTM1 and TRPC4AP. Interacts with DAB2IP. Interacts directly with NOL3 (via CARD domain); inhibits TNF-signaling pathway. Interacts with SH3RF2, TRADD and RIPK1. SH3RF2 facilitates the recruitment of RIPK1 and TRADD to TNFRSF1A in a TNF-alpha-dependent process. Interacts with PGLYRP1; this interaction is important for cell death induction. Interacts (via death domain) with MADD (via death domain). Post-translationally, (Microbial infection) Glycosylated at Arg-376 by S.typhimurium protein Ssek3: arginine GlcNAcylation prevents homotypic/heterotypic death domain interactions.

The protein resides in the cell membrane. It localises to the golgi apparatus membrane. Receptor for TNFSF2/TNF-alpha and homotrimeric TNFSF1/lymphotoxin-alpha. The adapter molecule FADD recruits caspase-8 to the activated receptor. The resulting death-inducing signaling complex (DISC) performs caspase-8 proteolytic activation which initiates the subsequent cascade of caspases (aspartate-specific cysteine proteases) mediating apoptosis. The protein is Tumor necrosis factor receptor superfamily member 1A (Tnfrsf1a) of Mus musculus (Mouse).